The sequence spans 289 residues: Glycine-rich RNA-binding protein 5, mitochondrial (289 aa).

Residues 1-31 constitute a mitochondrion transit peptide; that stretch reads MAFLSKVGRLFSQTSSHVTASSSMLQSIRCM. One can recognise an RRM domain in the interval 34–111; that stretch reads SKIFVGGISY…RRIRVNYATE (78 aa). Residues 219-289 form a disordered region; the sequence is QGSSTNAGFD…TDDGDVAKRA (71 aa). Residues 257 to 272 are compositionally biased toward polar residues; that stretch reads GSDNQFGDAENGNTEN.

It belongs to the GR-RBP family. Homodimer. Interacts with MORF8/RIP1 AND RBG3/ORRM3. Binds to RBG2/ORRM5.

Its subcellular location is the mitochondrion. Functionally, possibly has a role in RNA transcription or processing during stress. Binds RNAs and DNAs sequence with a preference to single-stranded nucleic acids. Displays strong affinity to poly(U) sequence. Involved in C-to-U editing of mitochondrial RNA. Functions as a major mitochondrial editing factor. Controls 44 percent of the mitochondrial editing sites. The chain is Glycine-rich RNA-binding protein 5, mitochondrial from Arabidopsis thaliana (Mouse-ear cress).